Here is a 160-residue protein sequence, read N- to C-terminus: Ribosomal RNA large subunit methyltransferase H (160 aa).

S-adenosyl-L-methionine-binding residues include Leu-76 and Gly-108.

Belongs to the RNA methyltransferase RlmH family. As to quaternary structure, homodimer.

The protein localises to the cytoplasm. The catalysed reaction is pseudouridine(1915) in 23S rRNA + S-adenosyl-L-methionine = N(3)-methylpseudouridine(1915) in 23S rRNA + S-adenosyl-L-homocysteine + H(+). In terms of biological role, specifically methylates the pseudouridine at position 1915 (m3Psi1915) in 23S rRNA. The sequence is that of Ribosomal RNA large subunit methyltransferase H from Rhodopseudomonas palustris (strain TIE-1).